A 165-amino-acid polypeptide reads, in one-letter code: Destrin (165 aa).

Ala2 is subject to N-acetylalanine. Ser3 is subject to Phosphoserine. The region spanning Gly4–Gly153 is the ADF-H domain. Lys19 bears the N6-acetyllysine mark. The Nuclear localization signal motif lies at Lys30–Lys34.

The protein belongs to the actin-binding proteins ADF family. ISGylated.

Its function is as follows. Actin-depolymerizing protein. Severs actin filaments (F-actin) and binds to actin monomers (G-actin). Acts in a pH-independent manner. The chain is Destrin (DSTN) from Bos taurus (Bovine).